The sequence spans 269 residues: Small ribosomal subunit protein uS2 (269 aa).

The tract at residues 228–269 (ARAERQAAAAKDAAGDTGKSEADAEAVKAEAAAEEKAETTEA) is disordered. Residues 233–244 (QAAAAKDAAGDT) show a composition bias toward low complexity. Over residues 245–269 (GKSEADAEAVKAEAAAEEKAETTEA) the composition is skewed to basic and acidic residues.

The protein belongs to the universal ribosomal protein uS2 family.

In Corynebacterium urealyticum (strain ATCC 43042 / DSM 7109), this protein is Small ribosomal subunit protein uS2.